We begin with the raw amino-acid sequence, 189 residues long: WASH complex subunit homolog 3 (189 aa).

Residues 35–74 adopt a coiled-coil conformation; sequence MTEMLNNFGNKMEDILEKAEQSLDTADRKLRLMESKLAGM. Disordered regions lie at residues 76–101 and 150–189; these read LEDK…NPSS and SEGV…SDSD. The segment covering 150–165 has biased composition (basic and acidic residues); the sequence is SEGVDPSILKRGDEPS. Polar residues predominate over residues 167–189; sequence PQAQTSRNYESSGESTASFSDSD. Threonine 182 is subject to Phosphothreonine.

This sequence belongs to the CCDC53 family. In terms of assembly, probable component of the WASH complex. Component of the DHIC (ddl-1-containing hsf-1 inhibitory complex), which contains at least ddl-1, ddl-2, hsb-1 and hsf-1. Within the complex, interacts with ddl-2. Within the complex, interacts with hsb-1. Within the complex, interacts with hsf-1. Formation of the DHIC may be dependent upon the Insulin/IGF-1-like signaling (IIS) mediated pathway. Phosphorylated. Phosphorylation on Thr-182 may promote DHIC complex dissociation and consequently the activation of heat-shock transcription factor hsf-1. Phosphorylation is modulated by the Insulin/IGF-1-like signaling (IIS) mediated pathway. As to expression, expressed in pharynx, intestine, body wall muscles, vulva muscles, spermatheca, and several head and tail neurons.

In terms of biological role, acts as a component of the WASH core complex that functions as a nucleation-promoting factor (NPF) at the surface of endosomes, where it recruits and activates the Arp2/3 complex to induce actin polymerization, playing a key role in the fission of tubules that serve as transport intermediates during endosome sorting. Acts as a component of the DHIC (ddl-1-containing hsf-1 inhibitory complex) which modulates lifespan by sequestering the heat-shock transcription factor hsf-1 to negatively regulate its binding to DNA and its transcriptional activity. In Caenorhabditis elegans, this protein is WASH complex subunit homolog 3 (ddl-1).